Consider the following 148-residue polypeptide: Large ribosomal subunit protein bL9 (148 aa).

The protein belongs to the bacterial ribosomal protein bL9 family.

In terms of biological role, binds to the 23S rRNA. The polypeptide is Large ribosomal subunit protein bL9 (Listeria monocytogenes serotype 4b (strain CLIP80459)).